We begin with the raw amino-acid sequence, 421 residues long: General transcription factor IIH subunit 2 (421 aa).

The interval 1 to 26 (MSNQRKRSNDEREEEDDEDAEGIGEW) is disordered. Over residues 11–24 (EREEEDDEDAEGIG) the composition is skewed to acidic residues. Positions 83-272 (YLYIVIDFSR…IAEFAIANLI (190 aa)) constitute a VWFA domain. Residues 362 to 408 (CFGCQQSLIGAGNKPVPCVTCRKCKHYFCLDCDIYIHESLHNCPGCE) form an RING-type zinc finger.

This sequence belongs to the GTF2H2 family. Component of the 7-subunit TFIIH core complex composed of XPB, XPD, TFB1/GTF2H1, GTF2H2/P44, TFB4/GTF2H3, TFB2/GTF2H4 and TFB5/GTF2H5, which is active in NER. The core complex associates with the 3-subunit CDK-activating kinase (CAK) module composed of CYCH1/cyclin H1, CDKD and MAT1/At4g30820 to form the 10-subunit holoenzyme (holo-TFIIH) active in transcription. Interacts with XPD.

The protein localises to the nucleus. Component of the general transcription and DNA repair factor IIH (TFIIH) core complex, which is involved in general and transcription-coupled nucleotide excision repair (NER) of damaged DNA and, when complexed to CAK, in RNA transcription by RNA polymerase II. In NER, TFIIH acts by opening DNA around the lesion to allow the excision of the damaged oligonucleotide and its replacement by a new DNA fragment. In transcription, TFIIH has an essential role in transcription initiation. When the pre-initiation complex (PIC) has been established, TFIIH is required for promoter opening and promoter escape. Phosphorylation of the C-terminal tail (CTD) of the largest subunit of RNA polymerase II by the kinase module CAK controls the initiation of transcription. Can restore UV resistance in the NER-deficient ssl1-1 yeast mutant. The polypeptide is General transcription factor IIH subunit 2 (Arabidopsis thaliana (Mouse-ear cress)).